We begin with the raw amino-acid sequence, 66 residues long: Alpha-conotoxin GIB (66 aa).

The signal sequence occupies residues 1–21 (MGMRMMFTVFLLVVLATTVVS). Residues 22–49 (FPSERASDGRDDTAKDEGSDMEKLVEKK) constitute a propeptide that is removed on maturation. Intrachain disulfides connect cysteine 51–cysteine 56 and cysteine 52–cysteine 62. Residue glycine 64 is modified to Glycine amide.

It belongs to the conotoxin A superfamily. In terms of tissue distribution, expressed by the venom duct.

Its subcellular location is the secreted. In terms of biological role, alpha-conotoxins act on postsynaptic membranes, they bind to the nicotinic acetylcholine receptors (nAChR) and thus inhibit them. Both the globular (with C1-C3; C2-C4 disulfide pattern) and ribbon (C1-C4; C2-C3) isomers reversibly inhibit human muscle-type alpha-1-beta-1-delta-epsilon/CHRNA1-CHRNB1-CHRND-CHRNE nAChRs (IC(50)=116 nM and IC(50)=643 nM, respectively). Both isomers also inhibit alpha-7/CHRNA7 and alpha-9-alpha-10/CHRNA9-CHRNA10 (IC(50)=1113 nM by globular isomer) nAChRs. This Conus geographus (Geography cone) protein is Alpha-conotoxin GIB.